The following is a 741-amino-acid chain: MAAAEGPVGDGELWQTWLPNHVVFLRLREGLKNQSPTEAEKPASSSLPSSPPPQLLTRNVVFGLGGELFLWDGEDSSFLVVRLRGPSGGGEEPALSQYQRLLCINPPLFEIYQVLLSPTQHHVALIGIKGLMVLELPKRWGKNSEFEGGKSTVNCSTTPVAERFFTSSTSLTLKHAAWYPSEILDPHVVLLTSDNVIRIYSLREPQTPTNVIILSEAEEESLVLNKGRAYTASLGETAVAFDFGPLAAVPKTLFGQNGKDEVVAYPLYILYENGETFLTYISLLHSPGNIGKLLGPLPMHPAAEDNYGYDACAVLCLPCVPNILVIATESGMLYHCVVLEGEEEDDHTSEKSWDSRIDLIPSLYVFECVELELALKLASGEDDPFDSDFSCPVKLHRDPKCPSRYHCTHEAGVHSVGLTWIHKLHKFLGSDEEDKDSLQELSTEQKCFVEHILCTKPLPCRQPAPIRGFWIVPDILGPTMICITSTYECLIWPLLSTVHPASPPLLCTREDVEVAESPLRVLAETPDSFEKHIRSILQRSVANPAFLKASEKDIAPPPEECLQLLSRATQVFREQYILKQDLAKEEIQRRVKLLCDQKKKQLEDLSYCREERKSLREMAERLADKYEEAKEKQEDIMNRMKKLLHSFHSELPVLSDSERDMKKELQLIPDQLRHLGNAIKQVTMKKDYQQQKMEKVLSLPKPTIILSAYQRKCIQSILKEEGEHIREMVKQINDIRNHVNF.

N-acetylalanine is present on Ala2. Residues Ser35, Ser50, Ser379, Ser437, Ser442, and Ser517 each carry the phosphoserine modification. Thr525 is subject to Phosphothreonine. Residue Ser540 is modified to Phosphoserine. A coiled-coil region spans residues 585–651 (EEIQRRVKLL…KLLHSFHSEL (67 aa)). Ser698 carries the post-translational modification Phosphoserine.

As to quaternary structure, interacts with NUP214/CAN. Interacts with NUP62 and NUP98. As to expression, ubiquitous.

It is found in the nucleus. The protein resides in the nuclear pore complex. Component of nuclear pore complex. This chain is Nuclear pore complex protein Nup88 (NUP88), found in Homo sapiens (Human).